The primary structure comprises 430 residues: tRNA(Ile)-lysidine synthase (430 aa).

21 to 26 (SGGLDS) lines the ATP pocket.

It belongs to the tRNA(Ile)-lysidine synthase family.

The protein localises to the cytoplasm. It catalyses the reaction cytidine(34) in tRNA(Ile2) + L-lysine + ATP = lysidine(34) in tRNA(Ile2) + AMP + diphosphate + H(+). Its function is as follows. Ligates lysine onto the cytidine present at position 34 of the AUA codon-specific tRNA(Ile) that contains the anticodon CAU, in an ATP-dependent manner. Cytidine is converted to lysidine, thus changing the amino acid specificity of the tRNA from methionine to isoleucine. The protein is tRNA(Ile)-lysidine synthase of Salmonella dublin (strain CT_02021853).